A 457-amino-acid chain; its full sequence is Phosphomethylpyrimidine synthase (457 aa).

Substrate contacts are provided by residues asparagine 81, methionine 110, tyrosine 139, histidine 175, 195 to 197 (SRG), 236 to 239 (DALR), and glutamate 275. Residue histidine 279 coordinates Zn(2+). Tyrosine 302 contributes to the substrate binding site. Histidine 343 is a binding site for Zn(2+). The [4Fe-4S] cluster site is built by cysteine 423, cysteine 426, and cysteine 431.

Belongs to the ThiC family. The cofactor is [4Fe-4S] cluster.

The catalysed reaction is 5-amino-1-(5-phospho-beta-D-ribosyl)imidazole + S-adenosyl-L-methionine = 4-amino-2-methyl-5-(phosphooxymethyl)pyrimidine + CO + 5'-deoxyadenosine + formate + L-methionine + 3 H(+). The protein operates within cofactor biosynthesis; thiamine diphosphate biosynthesis. Functionally, catalyzes the synthesis of the hydroxymethylpyrimidine phosphate (HMP-P) moiety of thiamine from aminoimidazole ribotide (AIR) in a radical S-adenosyl-L-methionine (SAM)-dependent reaction. This chain is Phosphomethylpyrimidine synthase, found in Aquifex aeolicus (strain VF5).